A 686-amino-acid polypeptide reads, in one-letter code: Delta-like protein 4 (686 aa).

The signal sequence occupies residues 1-27; that stretch reads MTPGSRSACRWALLLLAVLWPQQRAAG. At 28-530 the chain is on the extracellular side; sequence SGIFQLRLQE…PVGLPPSFPW (503 aa). 2 cysteine pairs are disulfide-bonded: cysteine 51–cysteine 55 and cysteine 62–cysteine 75. 3 N-linked (GlcNAc...) asparagine glycosylation sites follow: asparagine 79, asparagine 109, and asparagine 162. The DSL domain maps to 174-218; sequence VVCSDNYYGDSCSRLCKKRDDHFGHYECQPDGSLSCLPGWTGKYC. Cysteine 176 and cysteine 185 form a disulfide bridge. Interaction with Notch1 stretches follow at residues 186–188 and 192–196; these read SRL and RDDHF. 26 disulfides stabilise this stretch: cysteine 189-cysteine 201, cysteine 209-cysteine 218, cysteine 223-cysteine 234, cysteine 227-cysteine 240, cysteine 242-cysteine 251, cysteine 254-cysteine 265, cysteine 260-cysteine 271, cysteine 273-cysteine 282, cysteine 289-cysteine 301, cysteine 295-cysteine 311, cysteine 313-cysteine 322, cysteine 329-cysteine 340, cysteine 334-cysteine 349, cysteine 351-cysteine 360, cysteine 367-cysteine 378, cysteine 372-cysteine 389, cysteine 391-cysteine 400, cysteine 407-cysteine 418, cysteine 412-cysteine 427, cysteine 429-cysteine 438, cysteine 445-cysteine 456, cysteine 450-cysteine 465, cysteine 467-cysteine 476, cysteine 485-cysteine 496, cysteine 490-cysteine 507, and cysteine 509-cysteine 518. EGF-like domains follow at residues 219–252, 256–283, 285–323, 325–361, 363–401, 403–439, 441–477, and 481–519; these read DQPI…PLCN, PHNG…LFCD, DLNY…EHCE, ELSK…QHCE, STLT…SNCE, KVDR…THCE, HISD…RRCE, and TNDA…SRCE. Residues 531 to 551 traverse the membrane as a helical segment; that stretch reads VAVSLGVGLVVLLVLLVMVAV. The Cytoplasmic segment spans residues 552 to 686; the sequence is AVRQLRLRRP…RNECVIATEV (135 aa).

In terms of assembly, interacts with NOTCH4. Interacts (via N-terminal DSL and MNNL domains) with NOTCH1 (via EGF-like domains).

It localises to the cell membrane. Functionally, involved in the Notch signaling pathway as Notch ligand. Activates NOTCH1 and NOTCH4. Involved in angiogenesis; negatively regulates endothelial cell proliferation and migration and angiogenic sprouting. Essential for retinal progenitor proliferation. Required for suppressing rod fates in late retinal progenitors as well as for proper generation of other retinal cell types. During spinal cord neurogenesis, inhibits V2a interneuron fate. The sequence is that of Delta-like protein 4 from Rattus norvegicus (Rat).